Reading from the N-terminus, the 164-residue chain is Crossover junction endodeoxyribonuclease RuvC (164 aa).

Catalysis depends on residues Asp-7, Glu-66, and Asp-138. Mg(2+) is bound by residues Asp-7, Glu-66, and Asp-138.

The protein belongs to the RuvC family. Homodimer which binds Holliday junction (HJ) DNA. The HJ becomes 2-fold symmetrical on binding to RuvC with unstacked arms; it has a different conformation from HJ DNA in complex with RuvA. In the full resolvosome a probable DNA-RuvA(4)-RuvB(12)-RuvC(2) complex forms which resolves the HJ. The cofactor is Mg(2+).

The protein localises to the cytoplasm. It carries out the reaction Endonucleolytic cleavage at a junction such as a reciprocal single-stranded crossover between two homologous DNA duplexes (Holliday junction).. Functionally, the RuvA-RuvB-RuvC complex processes Holliday junction (HJ) DNA during genetic recombination and DNA repair. Endonuclease that resolves HJ intermediates. Cleaves cruciform DNA by making single-stranded nicks across the HJ at symmetrical positions within the homologous arms, yielding a 5'-phosphate and a 3'-hydroxyl group; requires a central core of homology in the junction. The consensus cleavage sequence is 5'-(A/T)TT(C/G)-3'. Cleavage occurs on the 3'-side of the TT dinucleotide at the point of strand exchange. HJ branch migration catalyzed by RuvA-RuvB allows RuvC to scan DNA until it finds its consensus sequence, where it cleaves and resolves the cruciform DNA. In Paracoccus denitrificans (strain Pd 1222), this protein is Crossover junction endodeoxyribonuclease RuvC.